A 229-amino-acid chain; its full sequence is Large ribosomal subunit protein uL1 (229 aa).

Belongs to the universal ribosomal protein uL1 family. In terms of assembly, part of the 50S ribosomal subunit.

Its function is as follows. Binds directly to 23S rRNA. The L1 stalk is quite mobile in the ribosome, and is involved in E site tRNA release. Protein L1 is also a translational repressor protein, it controls the translation of the L11 operon by binding to its mRNA. The protein is Large ribosomal subunit protein uL1 of Caulobacter vibrioides (strain ATCC 19089 / CIP 103742 / CB 15) (Caulobacter crescentus).